The sequence spans 750 residues: Amyloid-beta A4 precursor protein-binding family A member 2 (750 aa).

Disordered regions lie at residues 1–94 (MAHR…PEEE) and 143–346 (DSVG…IPET). Residue S11 is modified to Phosphoserine. Over residues 70-80 (GDSSSDYVNNT) the composition is skewed to polar residues. A compositionally biased stretch (acidic residues) spans 81 to 94 (SEEEDYDEGLPEEE). The segment at 185–271 (HYCSSKESYQ…STEACPPSDT (87 aa)) is STXBP1-binding. S209 bears the Phosphoserine mark. Residues 219–228 (DLEEQEEDID) show a composition bias toward acidic residues. 2 stretches are compositionally biased toward polar residues: residues 238 to 248 (LSMTSITSASE) and 332 to 344 (SDLNGPTDNNNIP). The PID domain maps to 367 to 556 (LIDGIIFAAN…IINTQEMYND (190 aa)). 2 consecutive PDZ domains span residues 569–654 (ELQL…NIVS) and 660–736 (TVLI…MPAA).

In terms of assembly, part of a multimeric complex containing STXBP1 and syntaxin-1. Binds to the cytoplasmic domain of amyloid-beta protein, and to the nuclear factor NF-kappa-B/p65 via its PDZ domain. Interacts with the N-terminal domain of NECAB3. As to expression, specifically expressed in neurons, predominantly of the cerebellum, hippocampus, and spinal cord. Lesser extent in neurons of the cerebral cortex and anterior thalmic nuclei.

Putative function in synaptic vesicle exocytosis by binding to STXBP1, an essential component of the synaptic vesicle exocytotic machinery. May modulate processing of the amyloid-beta precursor protein (APP) and hence formation of APP-beta. The polypeptide is Amyloid-beta A4 precursor protein-binding family A member 2 (Apba2) (Mus musculus (Mouse)).